Reading from the N-terminus, the 416-residue chain is Splicing factor U2AF 50 kDa subunit (416 aa).

The segment covering 1 to 10 has biased composition (basic and acidic residues); that stretch reads MGYDDRERDR. The interval 1 to 47 is disordered; it reads MGYDDRERDRERRRHRSRSRDRHRERSRDRRHHRNSRRKPSLYWDVP. Composition is skewed to basic residues over residues 11-21 and 29-40; these read ERRRHRSRSRD and DRRHHRNSRRKP. RRM domains lie at 93–175, 207–285, and 318–408; these read RRLY…RPHD, HKIF…RASV, and EVLC…YFDP.

The protein belongs to the splicing factor SR family. In terms of assembly, forms a heterodimer with the U2AF small subunit.

It is found in the nucleus. Its function is as follows. Necessary for the splicing of pre-mRNA. Binds to the polypyrimidine tract of introns early during spliceosome assembly. The protein is Splicing factor U2AF 50 kDa subunit (U2af50) of Drosophila melanogaster (Fruit fly).